We begin with the raw amino-acid sequence, 192 residues long: NF-kappa-B inhibitor-interacting Ras-like protein 1 (192 aa).

Residue 11 to 18 participates in GTP binding; it reads GLLSVGKT. The short motif at 35–43 is the Effector region element; the sequence is DCETLEDVY. The tract at residues 58–93 is interactions with NFKBIA and NFKBIB; that stretch reads HLYDTRGLQKGVELPKHYFSFADGFVLVYSVNNLES. Residues 61 to 65 and 120 to 123 each bind GTP; these read DTRGL and NKLD. A disordered region spans residues 168-192; the sequence is LSQPQSKSSFPLPGRKNKGNSNPEN.

Belongs to the small GTPase superfamily. Ras family. KappaB-Ras subfamily. In terms of assembly, interacts with both NF-kappa-B inhibitor alpha (NFKBIA) and beta (NFKBIB) in vitro. However, it probably only interacts with NFKBIB in vivo. Forms a complex with NFKBIB and NF-kappa-B heterodimer (p50/NFKB1 and p65/RELA). Also interacts with c-Rel (REL).

The protein localises to the cytoplasm. Its function is as follows. Atypical Ras-like protein that acts as a potent regulator of NF-kappa-B activity by preventing the degradation of NF-kappa-B inhibitor beta (NFKBIB) by most signals, explaining why NFKBIB is more resistant to degradation. May act by blocking phosphorylation of NFKBIB and mediating cytoplasmic retention of p65/RELA NF-kappa-B subunit. It is unclear whether it acts as a GTPase. Both GTP- and GDP-bound forms block phosphorylation of NFKBIB. The sequence is that of NF-kappa-B inhibitor-interacting Ras-like protein 1 (Nkiras1) from Mus musculus (Mouse).